Consider the following 201-residue polypeptide: Small ribosomal subunit protein uS4 (201 aa).

Residues leucine 26–glycine 48 are disordered. An S4 RNA-binding domain is found at glycine 92 to leucine 155.

The protein belongs to the universal ribosomal protein uS4 family. Part of the 30S ribosomal subunit. Contacts protein S5. The interaction surface between S4 and S5 is involved in control of translational fidelity.

One of the primary rRNA binding proteins, it binds directly to 16S rRNA where it nucleates assembly of the body of the 30S subunit. Functionally, with S5 and S12 plays an important role in translational accuracy. The sequence is that of Small ribosomal subunit protein uS4 from Bacteroides thetaiotaomicron (strain ATCC 29148 / DSM 2079 / JCM 5827 / CCUG 10774 / NCTC 10582 / VPI-5482 / E50).